Here is a 310-residue protein sequence, read N- to C-terminus: Probable plastid-lipid-associated protein 2, chloroplastic (310 aa).

The N-terminal 59 residues, 1-59 (MATVQLSTQFSCQTRVSISPNSKSISKPPFLVPVTSIIHRPMISTGGIAVSPRRVFKVR), are a transit peptide targeting the chloroplast. Thr-61 is modified (phosphothreonine). A coiled-coil region spans residues 65-94 (EIGSALLAAEEAIEDVEETERLKRSLVDSL).

Belongs to the PAP/fibrillin family.

The protein localises to the plastid. It is found in the chloroplast. The protein resides in the plastoglobule. Functionally, probably involved in light/cold stress-related jasmonate (JA) biosynthesis. This Arabidopsis thaliana (Mouse-ear cress) protein is Probable plastid-lipid-associated protein 2, chloroplastic (PAP2).